Consider the following 539-residue polypeptide: Beta-apo-4'-carotenal oxygenase (539 aa).

Residues E228 and C262 contribute to the active site.

It belongs to the aldehyde dehydrogenase family.

It carries out the reaction 4'-apo-beta-carotenal + NAD(+) + H2O = neurosporaxanthin + NADH + 2 H(+). Functionally, beta-apo-4'-carotenal oxygenase involved in the last step of synthesis of neurosporaxanthin, a carboxylic apocarotenoid acting as an essential protective pigments and leading to orange pigmentation. Converts the aldehyde beta-apo-4'-carotenal into neurosporaxanthin. Is also able to use shorter apocarotenals as substrates (such as beta-apo-8'-carotenal (C30), beta-apo-10'-carotenal (C27), or the acyclic apocarotenal apo-8'-lycopenal (C30)), indicating wide substrate specificity. Neurosporaxanthin is synthesized from geranyl-geranyl pyrophosphate (GGPP) through several enzymatic activities. Phytoene synthase activity performed by the bifunctional enzyme carAR first produces phytoene from geranyl-geranyl pyrophosphate (GGPP). The phytoene dehydrogenase carB then introduces 4 desaturations to lead to lycopene which is substrate of the carotene cyclase activity of carAR that leads to the production of gamma-carotene. CarB then performs a 5th desaturation reaction to yield torulene. Torulene is the substrate of the dioxidase carT that breaks the molecule, removing five carbon atoms to yield beta-apo-4'-carotenal, whereas the aldehyde dehydrogenase carD mediates the last step by converting beta-apo-4'-carotenal into neurosporaxanthin. The protein is Beta-apo-4'-carotenal oxygenase of Gibberella fujikuroi (strain CBS 195.34 / IMI 58289 / NRRL A-6831) (Bakanae and foot rot disease fungus).